We begin with the raw amino-acid sequence, 55 residues long: Large ribosomal subunit protein bL33 (55 aa).

This sequence belongs to the bacterial ribosomal protein bL33 family.

In Vibrio cholerae serotype O1 (strain ATCC 39541 / Classical Ogawa 395 / O395), this protein is Large ribosomal subunit protein bL33.